Reading from the N-terminus, the 112-residue chain is UPF0122 protein CPR_1686 (112 aa).

It belongs to the UPF0122 family.

Functionally, might take part in the signal recognition particle (SRP) pathway. This is inferred from the conservation of its genetic proximity to ftsY/ffh. May be a regulatory protein. This chain is UPF0122 protein CPR_1686, found in Clostridium perfringens (strain SM101 / Type A).